Reading from the N-terminus, the 662-residue chain is DNA ligase (662 aa).

Residues 34 to 38 (DYDYD), 83 to 84 (SI), and E113 contribute to the NAD(+) site. The active-site N6-AMP-lysine intermediate is the K115. Residues R136, E172, K286, and K310 each contribute to the NAD(+) site. C404, C407, C422, and C427 together coordinate Zn(2+). In terms of domain architecture, BRCT spans 583-662 (RESSSCLGKT…NDLLKILYPN (80 aa)).

It belongs to the NAD-dependent DNA ligase family. LigA subfamily. The cofactor is Mg(2+). Requires Mn(2+) as cofactor.

It carries out the reaction NAD(+) + (deoxyribonucleotide)n-3'-hydroxyl + 5'-phospho-(deoxyribonucleotide)m = (deoxyribonucleotide)n+m + AMP + beta-nicotinamide D-nucleotide.. Its function is as follows. DNA ligase that catalyzes the formation of phosphodiester linkages between 5'-phosphoryl and 3'-hydroxyl groups in double-stranded DNA using NAD as a coenzyme and as the energy source for the reaction. It is essential for DNA replication and repair of damaged DNA. This chain is DNA ligase, found in Chlamydia caviae (strain ATCC VR-813 / DSM 19441 / 03DC25 / GPIC) (Chlamydophila caviae).